An 88-amino-acid chain; its full sequence is Small ribosomal subunit protein bS16c (88 aa).

It belongs to the bacterial ribosomal protein bS16 family.

It localises to the plastid. The protein resides in the chloroplast. The polypeptide is Small ribosomal subunit protein bS16c (Jasminum nudiflorum (Winter jasmine)).